Reading from the N-terminus, the 107-residue chain is NADH dehydrogenase [ubiquinone] 1 beta subcomplex subunit 10-A (107 aa).

Positions 1–23 (MGRKKGLPEFEESAPDGFDPENP) are disordered.

The protein belongs to the complex I NDUFB10 subunit family. In terms of assembly, complex I is composed of at least 49 different subunits.

The protein resides in the mitochondrion inner membrane. Its function is as follows. Accessory subunit of the mitochondrial membrane respiratory chain NADH dehydrogenase (Complex I), that is believed not to be involved in catalysis. Complex I functions in the transfer of electrons from NADH to the respiratory chain. The immediate electron acceptor for the enzyme is believed to be ubiquinone. The chain is NADH dehydrogenase [ubiquinone] 1 beta subcomplex subunit 10-A from Arabidopsis thaliana (Mouse-ear cress).